The sequence spans 135 residues: Serine protease inhibitor swm-1 (135 aa).

An N-terminal signal peptide occupies residues 1–16; it reads MRILVIITCIVAVATA. Disulfide bonds link Cys20/Cys53, Cys29/Cys48, Cys33/Cys44, Cys37/Cys73, Cys55/Cys67, Cys80/Cys114, Cys89/Cys109, Cys93/Cys105, Cys97/Cys133, and Cys116/Cys127. TIL domains are found at residues 20–73 and 80–133; these read CEAN…VSEC and CPEN…KKDC. Asn83 carries N-linked (GlcNAc...) asparagine glycosylation.

In male, expressed in the vas deferens cuboidal cells and, in posterior body wall and male-specific diagonal muscles. In hermaphrodites, expressed in posterior body wall muscles and spermatheca.

It localises to the secreted. Its subcellular location is the cytoplasmic vesicle. It is found in the secretory vesicle lumen. In terms of biological role, serine protease inhibitor. Probably by inhibiting serine protease tyr-5 in males, prevents the maturation of spermatids into mature motile spermatozoa until their transfer into a hermaphrodite. Also required for efficient sperm transfer and thus for male fertility. This is Serine protease inhibitor swm-1 from Caenorhabditis elegans.